Reading from the N-terminus, the 446-residue chain is Glycogen synthase (446 aa).

Arg15 lines the ADP-alpha-D-glucose pocket.

Belongs to the glycosyltransferase 1 family. Bacterial/plant glycogen synthase subfamily.

It catalyses the reaction [(1-&gt;4)-alpha-D-glucosyl](n) + ADP-alpha-D-glucose = [(1-&gt;4)-alpha-D-glucosyl](n+1) + ADP + H(+). It participates in glycan biosynthesis; glycogen biosynthesis. Synthesizes alpha-1,4-glucan chains using ADP-glucose. The polypeptide is Glycogen synthase (Deinococcus deserti (strain DSM 17065 / CIP 109153 / LMG 22923 / VCD115)).